The chain runs to 380 residues: D-alanine--D-alanine ligase (380 aa).

The region spanning 142-348 (KQVLTAHGIR…YADLIDRLIE (207 aa)) is the ATP-grasp domain. 172–227 (QSRLGDNVFIKPANQGSSVGIHKASNVQEYLDGVADAFRYDYKVLVEQTIDGPQEV) contacts ATP. Mg(2+)-binding residues include D302, E315, and N317.

Belongs to the D-alanine--D-alanine ligase family. Mg(2+) serves as cofactor. It depends on Mn(2+) as a cofactor.

It is found in the cytoplasm. It carries out the reaction 2 D-alanine + ATP = D-alanyl-D-alanine + ADP + phosphate + H(+). Its pathway is cell wall biogenesis; peptidoglycan biosynthesis. Cell wall formation. This Levilactobacillus brevis (strain ATCC 367 / BCRC 12310 / CIP 105137 / JCM 1170 / LMG 11437 / NCIMB 947 / NCTC 947) (Lactobacillus brevis) protein is D-alanine--D-alanine ligase.